A 96-amino-acid chain; its full sequence is Small ribosomal subunit protein bS21 (96 aa).

A compositionally biased stretch (basic and acidic residues) spans 37 to 52 (EKPSEKKAREKAEAVR). The disordered stretch occupies residues 37–96 (EKPSEKKAREKAEAVRRARKLARKKLQREGLLPSKPKPVFGADRGRGAAGGAGGAPRPAR). The segment covering 53–62 (RARKLARKKL) has biased composition (basic residues).

Belongs to the bacterial ribosomal protein bS21 family.

This Afipia carboxidovorans (strain ATCC 49405 / DSM 1227 / KCTC 32145 / OM5) (Oligotropha carboxidovorans) protein is Small ribosomal subunit protein bS21.